Consider the following 158-residue polypeptide: 6,7-dimethyl-8-ribityllumazine synthase (158 aa).

Residues phenylalanine 23, 61 to 63 (SFE), and 85 to 87 (AVI) contribute to the 5-amino-6-(D-ribitylamino)uracil site. Position 90–91 (90–91 (ET)) interacts with (2S)-2-hydroxy-3-oxobutyl phosphate. Histidine 93 acts as the Proton donor in catalysis. Phenylalanine 118 lines the 5-amino-6-(D-ribitylamino)uracil pocket. Arginine 132 serves as a coordination point for (2S)-2-hydroxy-3-oxobutyl phosphate.

The protein belongs to the DMRL synthase family.

The catalysed reaction is (2S)-2-hydroxy-3-oxobutyl phosphate + 5-amino-6-(D-ribitylamino)uracil = 6,7-dimethyl-8-(1-D-ribityl)lumazine + phosphate + 2 H2O + H(+). Its pathway is cofactor biosynthesis; riboflavin biosynthesis; riboflavin from 2-hydroxy-3-oxobutyl phosphate and 5-amino-6-(D-ribitylamino)uracil: step 1/2. Catalyzes the formation of 6,7-dimethyl-8-ribityllumazine by condensation of 5-amino-6-(D-ribitylamino)uracil with 3,4-dihydroxy-2-butanone 4-phosphate. This is the penultimate step in the biosynthesis of riboflavin. The protein is 6,7-dimethyl-8-ribityllumazine synthase of Prochlorococcus marinus (strain MIT 9312).